Reading from the N-terminus, the 161-residue chain is MKLEIEIEHWPDGEWESITGGAAKATRDVEPALAHARLETSVLFTSDEQVHVLNREWRERDKPTNVLSFPMLDRDRLRALEPEGPPEMLGDIALAYETCAREAEEKGISLEAHATHLIVHGLLHLAGHDHVDSDAQAEEMEALEIAALAKLGIADPYGDRT.

Histidine 120, histidine 124, and histidine 130 together coordinate Zn(2+).

The protein belongs to the endoribonuclease YbeY family. Zn(2+) serves as cofactor.

The protein resides in the cytoplasm. Its function is as follows. Single strand-specific metallo-endoribonuclease involved in late-stage 70S ribosome quality control and in maturation of the 3' terminus of the 16S rRNA. The protein is Endoribonuclease YbeY of Erythrobacter litoralis (strain HTCC2594).